Consider the following 261-residue polypeptide: Glandular kallikrein-7, submandibular/renal (261 aa).

Positions 1–18 (MWFLILFLDLSLGQIDAA) are cleaved as a signal peptide. A propeptide spans 19–24 (PPGQSR) (activation peptide). The Peptidase S1 domain occupies 25-258 (VIGGYKCEKN…FTSWIKEVMK (234 aa)). Intrachain disulfides connect Cys31/Cys173, Cys50/Cys66, Cys152/Cys219, Cys184/Cys198, and Cys209/Cys234. The active-site Charge relay system is His65. An N-linked (GlcNAc...) asparagine glycan is attached at Asn108. Asp120 functions as the Charge relay system in the catalytic mechanism. Catalysis depends on Ser213, which acts as the Charge relay system.

The protein belongs to the peptidase S1 family. Kallikrein subfamily. Kidney and submandibular gland. Not expressed in liver, pancreas, spleen, parotid, testis, cortex, prostate, ovary and pituitary.

The catalysed reaction is Preferential cleavage of Arg-|-Xaa bonds in small molecule substrates. Highly selective action to release kallidin (lysyl-bradykinin) from kininogen involves hydrolysis of Met-|-Xaa or Leu-|-Xaa.. In terms of biological role, glandular kallikreins cleave Met-Lys and Arg-Ser bonds in kininogen to release Lys-bradykinin. Predominant kallikrein protein in the kidney. This is Glandular kallikrein-7, submandibular/renal (Klk7) from Rattus norvegicus (Rat).